We begin with the raw amino-acid sequence, 251 residues long: Probable transcriptional regulatory protein cauri_1421 (251 aa).

A disordered region spans residues 1-21; the sequence is MAGHSKWATTKHKKAANDAKR.

It belongs to the TACO1 family.

The protein resides in the cytoplasm. This chain is Probable transcriptional regulatory protein cauri_1421, found in Corynebacterium aurimucosum (strain ATCC 700975 / DSM 44827 / CIP 107346 / CN-1) (Corynebacterium nigricans).